The chain runs to 921 residues: Isoleucine--tRNA ligase 1 (921 aa).

Residues 57-67 (PYANGDIHMGH) carry the 'HIGH' region motif. Glu-552 contributes to the L-isoleucyl-5'-AMP binding site. The 'KMSKS' region signature appears at 593–597 (KMSKS). Residue Lys-596 participates in ATP binding. Zn(2+) is bound by residues Cys-888, Cys-891, Cys-908, and Cys-911.

Belongs to the class-I aminoacyl-tRNA synthetase family. IleS type 1 subfamily. As to quaternary structure, monomer. Zn(2+) is required as a cofactor.

The protein resides in the cytoplasm. It catalyses the reaction tRNA(Ile) + L-isoleucine + ATP = L-isoleucyl-tRNA(Ile) + AMP + diphosphate. Catalyzes the attachment of isoleucine to tRNA(Ile). As IleRS can inadvertently accommodate and process structurally similar amino acids such as valine, to avoid such errors it has two additional distinct tRNA(Ile)-dependent editing activities. One activity is designated as 'pretransfer' editing and involves the hydrolysis of activated Val-AMP. The other activity is designated 'posttransfer' editing and involves deacylation of mischarged Val-tRNA(Ile). This Bacillus cereus (strain ATCC 10987 / NRS 248) protein is Isoleucine--tRNA ligase 1.